Consider the following 516-residue polypeptide: Cytochrome P450 1A2 (516 aa).

Residue serine 69 is glycosylated (O-linked (GlcNAc) serine). Phenylalanine 226 contributes to the substrate binding site. Cysteine 458 is a heme binding site.

It belongs to the cytochrome P450 family. As to quaternary structure, interacts with PGRMC1; the interaction requires PGRMC1 homodimerization. Heme serves as cofactor.

Its subcellular location is the endoplasmic reticulum membrane. It localises to the microsome membrane. It catalyses the reaction an organic molecule + reduced [NADPH--hemoprotein reductase] + O2 = an alcohol + oxidized [NADPH--hemoprotein reductase] + H2O + H(+). The catalysed reaction is 17beta-estradiol + reduced [NADPH--hemoprotein reductase] + O2 = 2-hydroxy-17beta-estradiol + oxidized [NADPH--hemoprotein reductase] + H2O + H(+). The enzyme catalyses 17beta-estradiol + reduced [NADPH--hemoprotein reductase] + O2 = 4-hydroxy-17beta-estradiol + oxidized [NADPH--hemoprotein reductase] + H2O + H(+). It carries out the reaction estrone + reduced [NADPH--hemoprotein reductase] + O2 = 2-hydroxyestrone + oxidized [NADPH--hemoprotein reductase] + H2O + H(+). It catalyses the reaction estrone + reduced [NADPH--hemoprotein reductase] + O2 = 4-hydroxyestrone + oxidized [NADPH--hemoprotein reductase] + H2O + H(+). The catalysed reaction is cholesterol + reduced [NADPH--hemoprotein reductase] + O2 = 25-hydroxycholesterol + oxidized [NADPH--hemoprotein reductase] + H2O + H(+). The enzyme catalyses all-trans-retinol + reduced [NADPH--hemoprotein reductase] + O2 = all-trans-retinal + oxidized [NADPH--hemoprotein reductase] + 2 H2O + H(+). It carries out the reaction all-trans-retinal + reduced [NADPH--hemoprotein reductase] + O2 = all-trans-retinoate + oxidized [NADPH--hemoprotein reductase] + H2O + 2 H(+). It catalyses the reaction (5Z,8Z,11Z,14Z)-eicosatetraenoate + reduced [NADPH--hemoprotein reductase] + O2 = (14R,15S)-epoxy-(5Z,8Z,11Z)-eicosatrienoate + oxidized [NADPH--hemoprotein reductase] + H2O + H(+). The catalysed reaction is (5Z,8Z,11Z,14Z)-eicosatetraenoate + reduced [NADPH--hemoprotein reductase] + O2 = (14S,15R)-epoxy-(5Z,8Z,11Z)-eicosatrienoate + oxidized [NADPH--hemoprotein reductase] + H2O + H(+). The enzyme catalyses (5Z,8Z,11Z,14Z,17Z)-eicosapentaenoate + reduced [NADPH--hemoprotein reductase] + O2 = (17R,18S)-epoxy-(5Z,8Z,11Z,14Z)-eicosatetraenoate + oxidized [NADPH--hemoprotein reductase] + H2O + H(+). It carries out the reaction (4Z,7Z,10Z,13Z,16Z,19Z)-docosahexaenoate + reduced [NADPH--hemoprotein reductase] + O2 = (19R,20S)-epoxy-(4Z,7Z,10Z,13Z,16Z)-docosapentaenoate + oxidized [NADPH--hemoprotein reductase] + H2O + H(+). It catalyses the reaction (5S)-hydroperoxy-(6E,8Z,11Z,14Z)-eicosatetraenoate = 5-oxo-(6E,8Z,11Z,14Z)-eicosatetraenoate + H2O. The catalysed reaction is (12S)-hydroperoxy-(5Z,8Z,10E,14Z)-eicosatetraenoate = 12-oxo-(5Z,8Z,10E,14Z)-eicosatetraenoate + H2O. The enzyme catalyses (15S)-hydroperoxy-(5Z,8Z,11Z,13E)-eicosatetraenoate = 15-oxo-(5Z,8Z,11Z,13E)-eicosatetraenoate + H2O. It carries out the reaction (13S)-hydroperoxy-(9Z,11E)-octadecadienoate = 13-oxo-(9Z,11E)-octadecadienoate + H2O. It catalyses the reaction (5Z,8Z,11Z,14Z)-eicosatetraenoate + reduced [NADPH--hemoprotein reductase] + O2 = 13-hydroxy-(5Z,8Z,11Z,14Z)-eicosatetraenoate + oxidized [NADPH--hemoprotein reductase] + H2O + H(+). The catalysed reaction is (5Z,8Z,11Z,14Z)-eicosatetraenoate + reduced [NADPH--hemoprotein reductase] + O2 = 19-hydroxy-(5Z,8Z,11Z,14Z)-eicosatetraenoate + oxidized [NADPH--hemoprotein reductase] + H2O + H(+). The enzyme catalyses (9Z,12Z)-octadecadienoate + reduced [NADPH--hemoprotein reductase] + O2 = 11-hydroxy-(9Z,12Z)-octadecadienoate + oxidized [NADPH--hemoprotein reductase] + H2O + H(+). It participates in cofactor metabolism; retinol metabolism. The protein operates within steroid metabolism; cholesterol metabolism. Its pathway is lipid metabolism; arachidonate metabolism. Functionally, a cytochrome P450 monooxygenase involved in the metabolism of various endogenous substrates, including fatty acids, steroid hormones and vitamins. Mechanistically, uses molecular oxygen inserting one oxygen atom into a substrate, and reducing the second into a water molecule, with two electrons provided by NADPH via cytochrome P450 reductase (NADPH--hemoprotein reductase). Catalyzes the hydroxylation of carbon-hydrogen bonds. Exhibits high catalytic activity for the formation of hydroxyestrogens from estrone (E1) and 17beta-estradiol (E2), namely 2-hydroxy E1 and E2. Metabolizes cholesterol toward 25-hydroxycholesterol, a physiological regulator of cellular cholesterol homeostasis. May act as a major enzyme for all-trans retinoic acid biosynthesis in the liver. Catalyzes two successive oxidative transformation of all-trans retinol to all-trans retinal and then to the active form all-trans retinoic acid. Primarily catalyzes stereoselective epoxidation of the last double bond of polyunsaturated fatty acids (PUFA), displaying a strong preference for the (R,S) stereoisomer. Catalyzes bisallylic hydroxylation and omega-1 hydroxylation of PUFA. May also participate in eicosanoids metabolism by converting hydroperoxide species into oxo metabolites (lipoxygenase-like reaction, NADPH-independent). Plays a role in the oxidative metabolism of xenobiotics. Catalyzes the N-hydroxylation of heterocyclic amines and the O-deethylation of phenacetin. Metabolizes caffeine via N3-demethylation. The polypeptide is Cytochrome P450 1A2 (CYP1A2) (Balaenoptera acutorostrata (Common minke whale)).